Consider the following 242-residue polypeptide: tRNA pseudouridine synthase A (242 aa).

Aspartate 51 acts as the Nucleophile in catalysis. Residue tyrosine 107 coordinates substrate.

It belongs to the tRNA pseudouridine synthase TruA family. In terms of assembly, homodimer.

It carries out the reaction uridine(38/39/40) in tRNA = pseudouridine(38/39/40) in tRNA. In terms of biological role, formation of pseudouridine at positions 38, 39 and 40 in the anticodon stem and loop of transfer RNAs. This chain is tRNA pseudouridine synthase A, found in Helicobacter pylori (strain P12).